Consider the following 332-residue polypeptide: Olfactory receptor 10G6 (332 aa).

Residues 1-46 are Extracellular-facing; sequence MLEGVEHLLLLLLLTDVNSKELQSGNQTSVSHFILVGLHHPPQLGA. Asn26 carries an N-linked (GlcNAc...) asparagine glycan. The chain crosses the membrane as a helical span at residues 47–67; the sequence is PLFLAFLVIYLLTVSGNGLII. Topologically, residues 68 to 75 are cytoplasmic; it reads LTVLVDIR. A helical membrane pass occupies residues 76 to 96; sequence LHRPMCLFLCHLSFLDMTISC. Over 97 to 120 the chain is Extracellular; that stretch reads AIVPKMLAGFLLGSRIISFGGCVI. Cys118 and Cys210 are oxidised to a cystine. Residues 121-141 form a helical membrane-spanning segment; it reads QLFSFHFLGCTECFLYTLMAY. Topologically, residues 142–160 are cytoplasmic; it reads DRFLAICKPLHYATIMTHR. A helical membrane pass occupies residues 161-181; the sequence is VCNSLALGTWLGGTIHSLFQT. Residues 182–218 lie on the Extracellular side of the membrane; it reads SFVFRLPFCGPNRVDYIFCDIPAMLRLACADTAINEL. The helical transmembrane segment at 219-238 threads the bilayer; sequence VTFADIGFLALTCFMLILTS. Topologically, residues 239-258 are cytoplasmic; it reads YGYIVAAILRIPSADGRRNA. The helical transmembrane segment at 259–279 threads the bilayer; that stretch reads FSTCAAHLTVVIVYYVPCTFI. The Extracellular portion of the chain corresponds to 280 to 290; it reads YLRPCSQEPLD. A helical transmembrane segment spans residues 291 to 311; it reads GVVAVFYTVITPLLNSIIYTL. Residues 312–332 lie on the Cytoplasmic side of the membrane; it reads CNKEMKAALQRLGGHKEVQPH.

It belongs to the G-protein coupled receptor 1 family.

It is found in the cell membrane. In terms of biological role, odorant receptor. This Homo sapiens (Human) protein is Olfactory receptor 10G6 (OR10G6).